We begin with the raw amino-acid sequence, 475 residues long: Ribulose bisphosphate carboxylase large chain (475 aa).

Residues 1-2 (MS) constitute a propeptide that is removed on maturation. An N-acetylproline modification is found at P3. The residue at position 14 (K14) is an N6,N6,N6-trimethyllysine. The substrate site is built by N123 and T173. The active-site Proton acceptor is the K175. K177 serves as a coordination point for substrate. Positions 201, 203, and 204 each coordinate Mg(2+). At K201 the chain carries N6-carboxylysine. Catalysis depends on H294, which acts as the Proton acceptor. Substrate-binding residues include R295, H327, and S379.

It belongs to the RuBisCO large chain family. Type I subfamily. Heterohexadecamer of 8 large chains and 8 small chains; disulfide-linked. The disulfide link is formed within the large subunit homodimers. Requires Mg(2+) as cofactor. The disulfide bond which can form in the large chain dimeric partners within the hexadecamer appears to be associated with oxidative stress and protein turnover.

It is found in the plastid. Its subcellular location is the chloroplast. It carries out the reaction 2 (2R)-3-phosphoglycerate + 2 H(+) = D-ribulose 1,5-bisphosphate + CO2 + H2O. The catalysed reaction is D-ribulose 1,5-bisphosphate + O2 = 2-phosphoglycolate + (2R)-3-phosphoglycerate + 2 H(+). In terms of biological role, ruBisCO catalyzes two reactions: the carboxylation of D-ribulose 1,5-bisphosphate, the primary event in carbon dioxide fixation, as well as the oxidative fragmentation of the pentose substrate in the photorespiration process. Both reactions occur simultaneously and in competition at the same active site. The protein is Ribulose bisphosphate carboxylase large chain of Cycas taitungensis (Prince sago).